Reading from the N-terminus, the 332-residue chain is MTIAPEGRRLLRVEARNAAVPIEKKPPWIKTRATMGPEYTELRSLVRREGLHTVCEEAGCPNIFECWEDREATFLIGGDQCTRRCDFCQIDTGKPADFDADEPRRVAESVQAMGLRYSTVTGVARDDLADGGAWLYAETVRQIHALNPGTGVELLIPDFNAEPDQLAEVFSSRPEVLAHNLETVPRVFKRIRPGFRYARSLSVLTAARDAGLVTKSNLILGMGETTAEAVEALADLHAAGCDLVTITQYLRPSPRHHPVERWVKPEEFVELSDEAERIGFLGVMAGPLVRSSYRAGRLWGQAMARRGLEVPPALAHLTEPTTSRQEAASLLR.

The [4Fe-4S] cluster site is built by cysteine 55, cysteine 60, cysteine 66, cysteine 81, cysteine 85, cysteine 88, and serine 292. The 215-residue stretch at 67-281 (WEDREATFLI…SDEAERIGFL (215 aa)) folds into the Radical SAM core domain.

This sequence belongs to the radical SAM superfamily. Lipoyl synthase family. Requires [4Fe-4S] cluster as cofactor.

The protein localises to the cytoplasm. It catalyses the reaction [[Fe-S] cluster scaffold protein carrying a second [4Fe-4S](2+) cluster] + N(6)-octanoyl-L-lysyl-[protein] + 2 oxidized [2Fe-2S]-[ferredoxin] + 2 S-adenosyl-L-methionine + 4 H(+) = [[Fe-S] cluster scaffold protein] + N(6)-[(R)-dihydrolipoyl]-L-lysyl-[protein] + 4 Fe(3+) + 2 hydrogen sulfide + 2 5'-deoxyadenosine + 2 L-methionine + 2 reduced [2Fe-2S]-[ferredoxin]. It participates in protein modification; protein lipoylation via endogenous pathway; protein N(6)-(lipoyl)lysine from octanoyl-[acyl-carrier-protein]: step 2/2. Catalyzes the radical-mediated insertion of two sulfur atoms into the C-6 and C-8 positions of the octanoyl moiety bound to the lipoyl domains of lipoate-dependent enzymes, thereby converting the octanoylated domains into lipoylated derivatives. This chain is Lipoyl synthase, found in Beutenbergia cavernae (strain ATCC BAA-8 / DSM 12333 / CCUG 43141 / JCM 11478 / NBRC 16432 / NCIMB 13614 / HKI 0122).